A 377-amino-acid polypeptide reads, in one-letter code: Nitric oxide reductase FlRd-NAD(+) reductase (377 aa).

This sequence belongs to the FAD-dependent oxidoreductase family. The cofactor is FAD.

The protein localises to the cytoplasm. It carries out the reaction 2 reduced [nitric oxide reductase rubredoxin domain] + NAD(+) + H(+) = 2 oxidized [nitric oxide reductase rubredoxin domain] + NADH. It participates in nitrogen metabolism; nitric oxide reduction. Its function is as follows. One of at least two accessory proteins for anaerobic nitric oxide (NO) reductase. Reduces the rubredoxin moiety of NO reductase. This is Nitric oxide reductase FlRd-NAD(+) reductase from Salmonella arizonae (strain ATCC BAA-731 / CDC346-86 / RSK2980).